The primary structure comprises 185 residues: uncharacterized protein (185 aa).

A run of 3 helical transmembrane segments spans residues 32–52 (LIFV…LLAF), 66–86 (LVTL…VLAV), and 155–175 (IGYG…FLVV).

The protein localises to the cell membrane. This is an uncharacterized protein from Bacillus subtilis (strain 168).